Here is a 203-residue protein sequence, read N- to C-terminus: Small ribosomal subunit protein uS4 (203 aa).

In terms of domain architecture, S4 RNA-binding spans 93-156 (RRLDNVVYRL…MKVPAILEAV (64 aa)).

This sequence belongs to the universal ribosomal protein uS4 family. In terms of assembly, part of the 30S ribosomal subunit. Contacts protein S5. The interaction surface between S4 and S5 is involved in control of translational fidelity.

One of the primary rRNA binding proteins, it binds directly to 16S rRNA where it nucleates assembly of the body of the 30S subunit. In terms of biological role, with S5 and S12 plays an important role in translational accuracy. In Streptococcus pyogenes serotype M49 (strain NZ131), this protein is Small ribosomal subunit protein uS4.